The sequence spans 143 residues: Sorting nexin-3 (143 aa).

Residues 23-140 (NILEIDVINP…SSFLQSPEFK (118 aa)) form the PX domain. A 1,2-diacyl-sn-glycero-3-phospho-(1D-myo-inositol-3-phosphate) is bound by residues Arg-66, Ser-68, Lys-92, Arg-97, and Arg-106.

Belongs to the sorting nexin family.

Its subcellular location is the cytoplasm. The protein resides in the golgi apparatus membrane. The protein localises to the prevacuolar compartment membrane. Its function is as follows. Required for retention of late Golgi membrane proteins. Component of the retrieval machinery that functions by direct interaction with the cytosolic tails of certain TGN membrane proteins during the sorting/budding process at the prevacuolar compartment. Binds phosphatidylinositol 3-phosphate (PtdIns(P3)). This Schizosaccharomyces pombe (strain 972 / ATCC 24843) (Fission yeast) protein is Sorting nexin-3 (snx3).